We begin with the raw amino-acid sequence, 2049 residues long: Polyunsaturated fatty acid synthase subunit B (2049 aa).

Ketosynthase family 3 (KS3) domains are found at residues 15–442 and 468–908; these read EKRI…VFEE and NMRI…LLSD. Catalysis depends on for beta-ketoacyl synthase 1 activity residues C196, H333, and H368. The interval 467–984 is chain length factor (CLF) domain; sequence NNMRIAITGM…LGETLAQEAD (518 aa). Positions 1044–1377 are acyltransferase (AT) domain; the sequence is RVAFMYGEGR…QRSHVTGAMD (334 aa). Residues 1500 to 1531 are disordered; that stretch reads NKDNQPAVAPAATAAPTPKPKPAASSGKPVPS. Positions 1505–1531 are enriched in low complexity; that stretch reads PAVAPAATAAPTPKPKPAASSGKPVPS. The tract at residues 1579 to 1887 is enoyl reductase (ER) domain; it reads SRAFMKTYGV…SRANKLYELF (309 aa).

As to quaternary structure, component of the polyunsaturated fatty acid synthase complex composed of at least ORF-A, ORF-B and ORF-C.

It functions in the pathway lipid metabolism; fatty acid biosynthesis. Functionally, poliketide synthase-like protein; part of the polyunsaturated fatty acid synthase composed of the 3 PKS-like subunits A, B and C. While the saturated fatty acids (SFAs) in Thraustochytrium are produced by the conventional fatty acid synthase (FAS) pathway, polyunsaturated fatty acids (PUFAs) including docosahexeanoic acid (DHA) and docosapentaenoic acid (DPA) are synthesized via an anaerobical PKS pathway. PUFA synthase assimilates fatty acyl-CoA, the product of FAS, as the starter unit to synthesize DPA, and this starter unit may be butyryl-CoA, hexanoyl-CoA, or octanoyl-CoA. DPA and DHA biosynthesis seem to differ by the reduction at the N-3 position by PUFA synthase, not the extension of carbon chain. In DHA biosynthesis, PUFA synthase extends the fatty acyl chain from the methyl toward the carboxyl end, and the double bond is formed when the carbon chain is growing, instead of afterward. Therefore, PUFA synthase is unable to transform DPA to DHA, suggesting that DPA is not the precursor of DHA. Moreover, DPA molecule is partly extended by FAS KS domain, so DPA biosynthesis is less dependent on PUFA synthase KS domain than DHA. This chain is Polyunsaturated fatty acid synthase subunit B, found in Thraustochytrium sp. (strain ATCC 26185 / S-3).